A 73-amino-acid polypeptide reads, in one-letter code: U-scoloptoxin(15)-Sm2a (73 aa).

Positions 1 to 20 (MKFYIVFCLFVVLLINFAAA) are cleaved as a signal peptide. 2 disulfide bridges follow: Cys39/Cys66 and Cys43/Cys68.

The protein belongs to the scoloptoxin-15 family. In terms of tissue distribution, expressed by the venom gland.

The protein resides in the secreted. Its function is as follows. Activity unknown, even that a lot of targets (Kv, Nav, Cav) have been tested and activities on insects and mice have been tested. The chain is U-scoloptoxin(15)-Sm2a from Scolopendra morsitans (Tanzanian blue ringleg centipede).